The chain runs to 157 residues: MLELDIQRATDAATPEDAALRRWCELALRQRSADSEMTIRLVDEAEGRELNHTYRHKDYATNVLSFPADVPDDLLDIPLLGDLVICVAVVEREAAEQGKSLEAHWAHLVIHGCLHLLGYDHIEDEEAEEMESLERELLAELGHPDPYADDETDTITH.

Residues His111, His115, and His121 each contribute to the Zn(2+) site.

It belongs to the endoribonuclease YbeY family. The cofactor is Zn(2+).

The protein localises to the cytoplasm. Functionally, single strand-specific metallo-endoribonuclease involved in late-stage 70S ribosome quality control and in maturation of the 3' terminus of the 16S rRNA. This is Endoribonuclease YbeY from Pseudomonas putida (strain ATCC 47054 / DSM 6125 / CFBP 8728 / NCIMB 11950 / KT2440).